A 91-amino-acid polypeptide reads, in one-letter code: Chorion class B protein M3A5 (91 aa).

Residues 1-51 (VASENRYEGTVGVSGNLPFLGTADVAGEFPTAGIGEILYGCGNGAVGITRE) are central domain. The tract at residues 52–91 (GGLGYGAGYGGGYGLGYGGYGGGYGLGYGGYGGCGCGCGY) is right arm (Gly-rich tandem repeats).

It belongs to the chorion protein family.

In terms of biological role, this protein is one of many from the eggshell of the silk moth. This is Chorion class B protein M3A5 from Bombyx mori (Silk moth).